The sequence spans 191 residues: Clusterin (191 aa).

N79, N116, N142, and N162 each carry an N-linked (GlcNAc...) asparagine glycan. Phosphoserine is present on S184.

This sequence belongs to the clusterin family. As to quaternary structure, antiparallel disulfide-linked heterodimer of an alpha chain and a beta chain. Self-associates and forms higher oligomers. Interacts with a broad range of misfolded proteins, including APP, APOC2 and LYZ. Slightly acidic pH promotes interaction with misfolded proteins. Forms high-molecular weight oligomers upon interaction with misfolded proteins. Interacts with APOA1, LRP2, CLUAP1 and PON1. Interacts with the complement membrane attack complex. Interacts (via alpha chain) with XRCC6. Interacts with SYVN1, COMMD1, BTRC, CUL1 and with ubiquitin and SCF (SKP1-CUL1-F-box protein) E3 ubiquitin-protein ligase complexes. Interacts (via alpha chain) with BAX in stressed cells, where BAX undergoes a conformation change leading to association with the mitochondrial membrane. Does not interact with BAX in unstressed cells. Found in a complex with LTF, CLU, EPPIN and SEMG1. Interacts (immaturely glycosylated pre-secreted form) with HSPA5; this interaction promotes CLU stability and facilitates stress-induced CLU retrotranslocation from the secretory pathway to the mitochondria, thereby reducing stress-induced apoptosis by stabilizing mitochondrial membrane integrity. Interacts with BCL2L1; this interaction releases and activates BAX and promotes cell death. Interacts with TGFBR2 and ACVR1. Interacts (secreted form) with STMN3; this interaction may act as an important modulator during neuronal differentiation. Post-translationally, proteolytically cleaved on its way through the secretory system, probably within the Golgi lumen. Proteolytic cleavage is not necessary for its chaperone activity. All non-secreted forms are not proteolytically cleaved. Chaperone activity of uncleaved forms is dependent on a non-reducing environment. In terms of processing, polyubiquitinated, leading to proteasomal degradation. Under cellular stress, the intracellular level of cleaved form is reduced due to proteasomal degradation. Heavily N-glycosylated. About 30% of the protein mass is comprised of complex N-linked carbohydrate. Endoplasmic reticulum (ER) stress induces changes in glycosylation status and increases level of hypoglycosylated forms. Core carbohydrates are essential for chaperone activity. Non-secreted forms are hypoglycosylated or unglycosylated.

It is found in the secreted. The protein resides in the nucleus. The protein localises to the cytoplasm. Its subcellular location is the mitochondrion membrane. It localises to the cytosol. It is found in the microsome. The protein resides in the endoplasmic reticulum. The protein localises to the mitochondrion. Its subcellular location is the perinuclear region. It localises to the cytoplasmic vesicle. It is found in the secretory vesicle. The protein resides in the chromaffin granule. In terms of biological role, functions as extracellular chaperone that prevents aggregation of non native proteins. Prevents stress-induced aggregation of blood plasma proteins. Inhibits formation of amyloid fibrils by APP, APOC2, B2M, CALCA, CSN3, SNCA and aggregation-prone LYZ variants (in vitro). Does not require ATP. Maintains partially unfolded proteins in a state appropriate for subsequent refolding by other chaperones, such as HSPA8/HSC70. Does not refold proteins by itself. Binding to cell surface receptors triggers internalization of the chaperone-client complex and subsequent lysosomal or proteasomal degradation. When secreted, protects cells against apoptosis and against cytolysis by complement: inhibits assembly of the complement membrane attack complex (MAC) by preventing polymerization of C9 pore component of the MAC complex. Intracellular forms interact with ubiquitin and SCF (SKP1-CUL1-F-box protein) E3 ubiquitin-protein ligase complexes and promote the ubiquitination and subsequent proteasomal degradation of target proteins. Promotes proteasomal degradation of COMMD1 and IKBKB. Modulates NF-kappa-B transcriptional activity. Following stress, promotes apoptosis. Inhibits apoptosis when associated with the mitochondrial membrane by interference with BAX-dependent release of cytochrome c into the cytoplasm. Plays a role in the regulation of cell proliferation. An intracellular form suppresses stress-induced apoptosis by stabilizing mitochondrial membrane integrity through interaction with HSPA5. Secreted form does not affect caspase or BAX-mediated intrinsic apoptosis and TNF-induced NF-kappa-B-activity. Secreted form act as an important modulator during neuronal differentiation through interaction with STMN3. Plays a role in the clearance of immune complexes that arise during cell injury. This Mesocricetus auratus (Golden hamster) protein is Clusterin.